The following is a 482-amino-acid chain: Cardiolipin synthase (482 aa).

Transmembrane regions (helical) follow at residues 4–24 (LAYL…VTVF) and 34–54 (WAWL…YLIF). 2 PLD phosphodiesterase domains span residues 217-244 (LNYR…GDEY) and 395-422 (DNGF…DFRS). Residues His222, Lys224, Asp229, His400, Lys402, and Asp407 contribute to the active site.

It belongs to the phospholipase D family. Cardiolipin synthase subfamily.

The protein localises to the cell membrane. The enzyme catalyses 2 a 1,2-diacyl-sn-glycero-3-phospho-(1'-sn-glycerol) = a cardiolipin + glycerol. In terms of biological role, catalyzes the reversible phosphatidyl group transfer from one phosphatidylglycerol molecule to another to form cardiolipin (CL) (diphosphatidylglycerol) and glycerol. This is Cardiolipin synthase (cls) from Listeria innocua serovar 6a (strain ATCC BAA-680 / CLIP 11262).